A 567-amino-acid polypeptide reads, in one-letter code: Urease subunit alpha (567 aa).

One can recognise a Urease domain in the interval 129-567; the sequence is GGVDTHIHFI…LPMAQRYFLF (439 aa). Ni(2+) is bound by residues His134, His136, and Lys217. At Lys217 the chain carries N6-carboxylysine. A substrate-binding site is contributed by His219. 2 residues coordinate Ni(2+): His246 and His272. His320 serves as the catalytic Proton donor. Asp360 is a Ni(2+) binding site.

Belongs to the metallo-dependent hydrolases superfamily. Urease alpha subunit family. In terms of assembly, heterotrimer of UreA (gamma), UreB (beta) and UreC (alpha) subunits. Three heterotrimers associate to form the active enzyme. The cofactor is Ni cation. Post-translationally, carboxylation allows a single lysine to coordinate two nickel ions.

Its subcellular location is the cytoplasm. It catalyses the reaction urea + 2 H2O + H(+) = hydrogencarbonate + 2 NH4(+). Its pathway is nitrogen metabolism; urea degradation; CO(2) and NH(3) from urea (urease route): step 1/1. In Proteus hauseri, this protein is Urease subunit alpha.